The sequence spans 536 residues: Phosphoenolpyruvate carboxykinase (ATP) (536 aa).

Substrate-binding residues include Arg-61, Tyr-195, and Lys-201. Residues Lys-201, His-220, and 236-244 (GLSGTGKTT) each bind ATP. Residues Lys-201 and His-220 each coordinate Mn(2+). Position 257 (Asp-257) interacts with Mn(2+). Residues Glu-285, Arg-322, and Thr-447 each coordinate ATP. Arg-322 provides a ligand contact to substrate.

The protein belongs to the phosphoenolpyruvate carboxykinase (ATP) family. It depends on Mn(2+) as a cofactor.

Its subcellular location is the cytoplasm. It carries out the reaction oxaloacetate + ATP = phosphoenolpyruvate + ADP + CO2. The protein operates within carbohydrate biosynthesis; gluconeogenesis. In terms of biological role, involved in the gluconeogenesis. Catalyzes the conversion of oxaloacetate (OAA) to phosphoenolpyruvate (PEP) through direct phosphoryl transfer between the nucleoside triphosphate and OAA. The chain is Phosphoenolpyruvate carboxykinase (ATP) from Brucella melitensis biotype 1 (strain ATCC 23456 / CCUG 17765 / NCTC 10094 / 16M).